The following is a 341-amino-acid chain: GDT1-like protein 1, chloroplastic (341 aa).

The span at 1-13 (MASVASSTVFASS) shows a compositional bias: low complexity. Disordered stretches follow at residues 1-41 (MASV…GRSV) and 54-76 (VVTR…GGGR). The transit peptide at 1 to 57 (MASVASSTVFASSLPHHRATTRAPPTPPRIPRRARLPGRSVVSCLPKRGSEKLVVTR) directs the protein to the chloroplast. The next 7 helical transmembrane spans lie at 79 to 99 (PSLD…VLML), 117 to 137 (VVGD…LIFF), 158 to 178 (AIIF…SVVL), 203 to 223 (FLAA…AASG), 246 to 266 (GAGI…VFIA), 286 to 306 (LGVI…AVLG), and 318 to 338 (IVAY…LVEI).

The protein belongs to the GDT1 family.

It is found in the plastid. The protein localises to the chloroplast membrane. The chain is GDT1-like protein 1, chloroplastic from Oryza sativa subsp. japonica (Rice).